Here is a 181-residue protein sequence, read N- to C-terminus: uncharacterized protein (181 aa).

At 1-14 (MQKCIMRSTEFKTH) the chain is on the cytoplasmic side. The helical transmembrane segment at 15–35 (FSFHSIFSFPLSAALLALISA) threads the bilayer. Residues 36-58 (SEPASKAFINVQFISSPLVKKEV) lie on the Extracellular side of the membrane. The chain crosses the membrane as a helical span at residues 59-79 (LPFIVSFHSLSSNGILSFSPF). Over 80 to 84 (TSSNL) the chain is Cytoplasmic. A helical membrane pass occupies residues 85–105 (SIAQLPFLIKVPLLSMGSLAL). Residues 106-116 (ENFNKFIPRAD) are Extracellular-facing. The chain crosses the membrane as a helical span at residues 117-137 (LVAAWVTIIMVFTFGNFLSTL). Topologically, residues 138–153 (SIKTGQNLWHLSKISS) are cytoplasmic. Residues 154–174 (SVSPLLLGIILGSQSGEIMLG) form a helical membrane-spanning segment. The Extracellular segment spans residues 175–181 (KNLLITS).

The protein localises to the membrane. This is an uncharacterized protein from Saccharomyces cerevisiae (strain ATCC 204508 / S288c) (Baker's yeast).